We begin with the raw amino-acid sequence, 538 residues long: Putative cysteine ligase BshC (538 aa).

The stretch at Val421–Asn485 forms a coiled coil.

The protein belongs to the BshC family.

Involved in bacillithiol (BSH) biosynthesis. May catalyze the last step of the pathway, the addition of cysteine to glucosamine malate (GlcN-Mal) to generate BSH. This is Putative cysteine ligase BshC from Bacillus cytotoxicus (strain DSM 22905 / CIP 110041 / 391-98 / NVH 391-98).